The sequence spans 748 residues: Signal transducer and activator of transcription 4 (748 aa).

Residues 569 to 664 (WIDGYVMGFV…ENPLKYLYPD (96 aa)) form the SH2 domain. K667 carries the N6-acetyllysine modification. Phosphotyrosine; by JAK is present on Y693. Position 721 is a phosphoserine; by MAP2K6 (S721).

Belongs to the transcription factor STAT family. Forms a homodimer or a heterodimer with a related family member. Interacts with ARL2BP. The SH2 domain interacts, in vitro, with IL12RB2 via a short cytoplasmic domain. Interacts with STAT1. Interacts with JUN; this complex efficiently interacts with the AP-1-related sequence of the IFN-gamma. In terms of processing, acetylation at Lys-667 is required for JAK2-mediated phosphorylation and activation of STAT4. Post-translationally, tyrosine phosphorylated upon IL12 and IFN-alpha activation, but not by IFN-gamma in T-lymphocytes and NK cells. Serine phosphorylation is required for maximal transcriptional activity but not for DNA binding. Phosphorylation by MAP2K6 at Ser-721 is required for full transcriptional activity induced by IL12. However this serine phosphorylation is not required for cell proliferation although critical for IFN-gamma production.

The protein resides in the cytoplasm. Its subcellular location is the nucleus. Transcriptional regulator mainly expressed in hematopoietic cells that plays a critical role in cellular growth, differentiation and immune response. Plays a key role in the differentiation of T-helper 1 cells and the production of interferon-gamma. Also participates in multiple neutrophil functions including chemotaxis and production of the neutrophil extracellular traps. After IL12 binding to its receptor IL12RB2, STAT4 interacts with the intracellular domain of IL12RB2 and becomes tyrosine phosphorylated. Phosphorylated STAT4 then homodimerizes and migrates to the nucleus where it can recognize STAT target sequences present in IL12 responsive genes. Although IL12 appears to be the predominant activating signal, STAT4 can also be phosphorylated and activated in response to IFN-gamma stimulation via JAK1 and TYK2 and in response to different interleukins including IL23, IL2 and IL35. Transcription activation of IFN-gamma gene is mediated by interaction with JUN that forms a complex that efficiently interacts with the AP-1-related sequence of the IFN-gamma promoter. In response to IFN-alpha/beta signaling, acts as a transcriptional repressor and suppresses IL5 and IL13 mRNA expression during response to T-cell receptor (TCR) activation. This chain is Signal transducer and activator of transcription 4 (STAT4), found in Homo sapiens (Human).